The chain runs to 243 residues: Phosphoribosylaminoimidazole-succinocarboxamide synthase (243 aa).

Belongs to the SAICAR synthetase family.

It carries out the reaction 5-amino-1-(5-phospho-D-ribosyl)imidazole-4-carboxylate + L-aspartate + ATP = (2S)-2-[5-amino-1-(5-phospho-beta-D-ribosyl)imidazole-4-carboxamido]succinate + ADP + phosphate + 2 H(+). Its pathway is purine metabolism; IMP biosynthesis via de novo pathway; 5-amino-1-(5-phospho-D-ribosyl)imidazole-4-carboxamide from 5-amino-1-(5-phospho-D-ribosyl)imidazole-4-carboxylate: step 1/2. This Lactiplantibacillus plantarum (strain ATCC BAA-793 / NCIMB 8826 / WCFS1) (Lactobacillus plantarum) protein is Phosphoribosylaminoimidazole-succinocarboxamide synthase.